Here is a 206-residue protein sequence, read N- to C-terminus: Large ribosomal subunit protein uL3 (206 aa).

The tract at residues 127–151 (SGGPSSHGSKFHRHLGGTGQATTPA) is disordered.

It belongs to the universal ribosomal protein uL3 family. As to quaternary structure, part of the 50S ribosomal subunit. Forms a cluster with proteins L14 and L19.

One of the primary rRNA binding proteins, it binds directly near the 3'-end of the 23S rRNA, where it nucleates assembly of the 50S subunit. This chain is Large ribosomal subunit protein uL3, found in Borreliella burgdorferi (strain ZS7) (Borrelia burgdorferi).